We begin with the raw amino-acid sequence, 612 residues long: Indole-3-acetic acid-amido synthetase GH3.6 (612 aa).

The protein belongs to the IAA-amido conjugating enzyme family. Expressed in cotyledons, stipules, true leaves, hypocotyls, and all parts of the roots. Not detected in flowers.

Catalyzes the synthesis of indole-3-acetic acid (IAA)-amino acid conjugates, providing a mechanism for the plant to cope with the presence of excess auxin. Strongly reactive with Glu, Gln, Trp, Asp, Ala, Leu, Phe, Gly, Tyr, Met, Ile and Val. Little or no product formation with His, Ser, Thr, Arg, Lys, or Cys. Also active on pyruvic and butyric acid analogs of IAA, PAA and the synthetic auxin naphthaleneacetic acid (NAA). The two chlorinated synthetic auxin herbicides 2,4-D and 3,6-dichloro-o-anisic acid (dicamba) cannot be used as substrates. Involved in auxin signal transduction. Inhibits shoot and hypocotyl cell elongation, and lateral root cell differentiation in light. The protein is Indole-3-acetic acid-amido synthetase GH3.6 (GH3.6) of Arabidopsis thaliana (Mouse-ear cress).